A 284-amino-acid chain; its full sequence is F-box protein PP2-B13 (284 aa).

The 44-residue stretch at M1–F44 folds into the F-box domain.

The chain is F-box protein PP2-B13 (PP2B13) from Arabidopsis thaliana (Mouse-ear cress).